The sequence spans 1088 residues: DNA polymerase delta catalytic subunit (1088 aa).

Belongs to the DNA polymerase type-B family. In terms of assembly, heterodimer with subunits of 125 kDa and 50 kDa. The 125 kDa subunit contains the polymerase active site and most likely the active site for the 3'-5' exonuclease activity.

The protein resides in the nucleus. It catalyses the reaction DNA(n) + a 2'-deoxyribonucleoside 5'-triphosphate = DNA(n+1) + diphosphate. In terms of biological role, this polymerase possesses two enzymatic activities: DNA synthesis (polymerase) and an exonucleolytic activity that degrades single-stranded DNA in the 3'- to 5'-direction. The protein is DNA polymerase delta catalytic subunit (POLD1) of Glycine max (Soybean).